The following is a 183-amino-acid chain: ATP-dependent protease subunit HslV (183 aa).

Thr2 is a catalytic residue. Na(+) contacts are provided by Gly157, Cys160, and Thr163.

It belongs to the peptidase T1B family. HslV subfamily. In terms of assembly, a double ring-shaped homohexamer of HslV is capped on each side by a ring-shaped HslU homohexamer. The assembly of the HslU/HslV complex is dependent on binding of ATP.

Its subcellular location is the cytoplasm. The catalysed reaction is ATP-dependent cleavage of peptide bonds with broad specificity.. With respect to regulation, allosterically activated by HslU binding. Protease subunit of a proteasome-like degradation complex believed to be a general protein degrading machinery. In Vibrio parahaemolyticus serotype O3:K6 (strain RIMD 2210633), this protein is ATP-dependent protease subunit HslV.